The chain runs to 274 residues: MQQLQNVIETAFERRADITPANVDTVTREAVKQVISLLDSGALRVAEKIDGQWVTHQWLKKAVLLSFRINDNQVIDGAESRYFDKVPMKFADYDEARFQKEGFRVVPPAAVRQGAFIARNTVLMPSYVNIGAYVDEGTMVDTWATVGSCAQIGKNVHLSGGVGIGGVLEPLQANPTIIEDNCFIGARSEVVEGVIVEEGSVISMGVYLGQSTKIYDRETGEVHYGRVPAGSVVVSGNLPSKDGKYSLYCAVIVKKVDAKTRGKVGINELLRTID.

Positions 104 and 141 each coordinate substrate.

It belongs to the transferase hexapeptide repeat family. In terms of assembly, homotrimer.

Its subcellular location is the cytoplasm. The enzyme catalyses (S)-2,3,4,5-tetrahydrodipicolinate + succinyl-CoA + H2O = (S)-2-succinylamino-6-oxoheptanedioate + CoA. Its pathway is amino-acid biosynthesis; L-lysine biosynthesis via DAP pathway; LL-2,6-diaminopimelate from (S)-tetrahydrodipicolinate (succinylase route): step 1/3. The polypeptide is 2,3,4,5-tetrahydropyridine-2,6-dicarboxylate N-succinyltransferase (Salmonella choleraesuis (strain SC-B67)).